The chain runs to 81 residues: UPF0410 protein YwzA (81 aa).

3 consecutive transmembrane segments (helical) span residues 1–21 (MSFL…SLFV), 27–47 (GGII…HGLL), and 56–76 (GFAI…VSLL).

Belongs to the UPF0410 family.

The protein resides in the cell membrane. The protein is UPF0410 protein YwzA (ywzA) of Bacillus subtilis (strain 168).